A 188-amino-acid chain; its full sequence is Inosine triphosphate pyrophosphatase (188 aa).

7 to 12 (TGNAGK) provides a ligand contact to ITP. Residue glutamate 36 participates in Mg(2+) binding. ITP contacts are provided by residues lysine 48, 64–65 (DT), lysine 81, 140–143 (FGWN), lysine 163, and 168–169 (HR).

It belongs to the HAM1 NTPase family. Homodimer. Mg(2+) serves as cofactor. The cofactor is Mn(2+).

The protein resides in the cytoplasm. The protein localises to the nucleus. The catalysed reaction is ITP + H2O = IMP + diphosphate + H(+). It catalyses the reaction dITP + H2O = dIMP + diphosphate + H(+). It carries out the reaction XTP + H2O = XMP + diphosphate + H(+). Functionally, pyrophosphatase that hydrolyzes non-canonical purine nucleotides such as inosine triphosphate (ITP), deoxyinosine triphosphate (dITP) or xanthosine 5'-triphosphate (XTP) to their respective monophosphate derivatives. The enzyme does not distinguish between the deoxy- and ribose forms. Probably excludes non-canonical purines from RNA and DNA precursor pools, thus preventing their incorporation into RNA and DNA and avoiding chromosomal lesions. This chain is Inosine triphosphate pyrophosphatase, found in Yarrowia lipolytica (strain CLIB 122 / E 150) (Yeast).